The chain runs to 220 residues: Small ribosomal subunit protein uS3 (220 aa).

One can recognise a KH type-2 domain in the interval Ile24 to Ser93.

It belongs to the universal ribosomal protein uS3 family. In terms of assembly, part of the 30S ribosomal subunit.

In terms of biological role, binds the lower part of the 30S subunit head. The chain is Small ribosomal subunit protein uS3 from Pyrobaculum arsenaticum (strain DSM 13514 / JCM 11321 / PZ6).